A 319-amino-acid chain; its full sequence is Zinc finger protein-like 1 homolog (319 aa).

Residues 1 to 43 (MGLCKCPKRKVTNLFCYEHRVNVCEFCLVDNHPNCVVQSYLNW) form a B box-type; degenerate zinc finger. An RING-type; atypical zinc finger spans residues 53 to 101 (CSLCHTTLTQGETIRLNCLHLLHWRCFDDWAASFPPTTAPAGYRCPCCS). The segment at 212 to 232 (ESSSDTRPLLRQDRDADNEEN) is disordered. Positions 219 to 232 (PLLRQDRDADNEEN) are enriched in basic and acidic residues. Residues 264–284 (KMAIFVMFLALLALITIITVL) traverse the membrane as a helical segment.

It belongs to the ZFPL1 family.

The protein localises to the membrane. The chain is Zinc finger protein-like 1 homolog from Caenorhabditis briggsae.